The primary structure comprises 58 residues: ComX pheromone (58 aa).

The propeptide occupies 1-52; that stretch reads MKQDMIDYLMKNPQVLTKLENGEASLIGIPDKLIPSIVDIFNKKMTLSKKCK. Tryptophan 56 carries the 3'-geranyl-2',N2-cyclotryptophan; in strain RO-E-2 /NRRL B-23055 lipid modification.

Interacts directly with the sensor histidine kinase ComP and stimulates its activity. Post-translationally, trp-56 is modified by geranylation, which is essential for activity. Modified by the tryptophan prenyltransferase ComQ before export to the extracellular environment. The type of isoprenyl derivative differs among the different pherotypes and depends on ComX primary sequence.

It is found in the secreted. Its function is as follows. Part of a major quorum-sensing system that regulates the development of genetic competence. Acts through the activation of the two-component regulatory system ComP/ComA composed of a sensor histidine kinase, ComP, and a response regulator, ComA. The sequence is that of ComX pheromone from Bacillus spizizenii (Bacillus subtilis subsp. spizizenii).